The following is a 113-amino-acid chain: T cell receptor alpha variable 12-2 (113 aa).

The first 20 residues, 1 to 20 (MKSLRVLLVILWLQLSWVWS), serve as a signal peptide directing secretion. The Ig-like domain maps to 23–113 (KEVEQNSGPL…DSATYLCAVN (91 aa)). N-linked (GlcNAc...) asparagine glycosylation occurs at asparagine 43. Residues cysteine 44 and cysteine 110 are joined by a disulfide bond.

In terms of assembly, alpha-beta TR is a heterodimer composed of an alpha and beta chain; disulfide-linked. The alpha-beta TR is associated with the transmembrane signaling CD3 coreceptor proteins to form the TR-CD3 (TcR or TCR). The assembly of alpha-beta TR heterodimers with CD3 occurs in the endoplasmic reticulum where a single alpha-beta TR heterodimer associates with one CD3D-CD3E heterodimer, one CD3G-CD3E heterodimer and one CD247 homodimer forming a stable octameric structure. CD3D-CD3E and CD3G-CD3E heterodimers preferentially associate with TR alpha and TR beta chains, respectively. The association of the CD247 homodimer is the last step of TcR assembly in the endoplasmic reticulum and is required for transport to the cell surface.

It is found in the cell membrane. V region of the variable domain of T cell receptor (TR) alpha chain that participates in the antigen recognition. Alpha-beta T cell receptors are antigen specific receptors which are essential to the immune response and are present on the cell surface of T lymphocytes. Recognize peptide-major histocompatibility (MH) (pMH) complexes that are displayed by antigen presenting cells (APC), a prerequisite for efficient T cell adaptive immunity against pathogens. Binding of alpha-beta TR to pMH complex initiates TR-CD3 clustering on the cell surface and intracellular activation of LCK that phosphorylates the ITAM motifs of CD3G, CD3D, CD3E and CD247 enabling the recruitment of ZAP70. In turn ZAP70 phosphorylates LAT, which recruits numerous signaling molecules to form the LAT signalosome. The LAT signalosome propagates signal branching to three major signaling pathways, the calcium, the mitogen-activated protein kinase (MAPK) kinase and the nuclear factor NF-kappa-B (NF-kB) pathways, leading to the mobilization of transcription factors that are critical for gene expression and essential for T cell growth and differentiation. The T cell repertoire is generated in the thymus, by V-(D)-J rearrangement. This repertoire is then shaped by intrathymic selection events to generate a peripheral T cell pool of self-MH restricted, non-autoaggressive T cells. Post-thymic interaction of alpha-beta TR with the pMH complexes shapes TR structural and functional avidity. The polypeptide is T cell receptor alpha variable 12-2 (Homo sapiens (Human)).